The following is a 251-amino-acid chain: Sugar fermentation stimulation protein homolog (251 aa).

This sequence belongs to the SfsA family.

This is Sugar fermentation stimulation protein homolog from Symbiobacterium thermophilum (strain DSM 24528 / JCM 14929 / IAM 14863 / T).